The following is a 315-amino-acid chain: Methionyl-tRNA formyltransferase (315 aa).

113 to 116 (SLLP) lines the (6S)-5,6,7,8-tetrahydrofolate pocket.

It belongs to the Fmt family.

The catalysed reaction is L-methionyl-tRNA(fMet) + (6R)-10-formyltetrahydrofolate = N-formyl-L-methionyl-tRNA(fMet) + (6S)-5,6,7,8-tetrahydrofolate + H(+). In terms of biological role, attaches a formyl group to the free amino group of methionyl-tRNA(fMet). The formyl group appears to play a dual role in the initiator identity of N-formylmethionyl-tRNA by promoting its recognition by IF2 and preventing the misappropriation of this tRNA by the elongation apparatus. This chain is Methionyl-tRNA formyltransferase, found in Shigella dysenteriae serotype 1 (strain Sd197).